We begin with the raw amino-acid sequence, 521 residues long: Aspartic proteinase yapsin-1 (521 aa).

The N-terminal stretch at 1-17 (MRIWILIFFSFIKLVSS) is a signal peptide. At 18-500 (LQYTGNGVLA…NAVANAGNSF (483 aa)) the chain is on the extracellular side. A Peptidase A1 domain is found at 67 to 409 (YTTTLSIGRP…HQSQKMIAIG (343 aa)). Asp-85 is an active-site residue. N-linked (GlcNAc...) asparagine glycosylation is found at Asn-136, Asn-157, Asn-250, Asn-289, Asn-295, Asn-354, Asn-414, Asn-418, Asn-460, and Asn-484. Residues 501–521 (SPLSAMVIMMMSAVFLGLGII) form a helical membrane-spanning segment.

It belongs to the peptidase A1 family.

Its subcellular location is the endoplasmic reticulum membrane. The protein localises to the secreted. It is found in the cell wall. Its function is as follows. Cleaves at paired basic residues. In Schizosaccharomyces pombe (strain 972 / ATCC 24843) (Fission yeast), this protein is Aspartic proteinase yapsin-1 (yps1).